The following is a 901-amino-acid chain: HTH-type transcriptional regulator MalT (901 aa).

ATP is bound at residue 39–46; sequence SPAGYGKT. The HTH luxR-type domain maps to 829-894; it reads ELIRTSPLTQ…DAVQHAQQLL (66 aa). A DNA-binding region (H-T-H motif) is located at residues 853 to 872; sequence NEQIAGELAVAATTIKTHIR.

It belongs to the MalT family. Monomer in solution. Oligomerizes to an active state in the presence of the positive effectors ATP and maltotriose.

Its activity is regulated as follows. Activated by ATP and maltotriose, which are both required for DNA binding. Functionally, positively regulates the transcription of the maltose regulon whose gene products are responsible for uptake and catabolism of malto-oligosaccharides. Specifically binds to the promoter region of its target genes, recognizing a short DNA motif called the MalT box. The protein is HTH-type transcriptional regulator MalT of Salmonella typhimurium (strain LT2 / SGSC1412 / ATCC 700720).